The chain runs to 1447 residues: Sister chromatid cohesion protein PDS5 homolog B (1447 aa).

The stretch at Leu383–Tyr419 is one HEAT repeat. The disordered stretch occupies residues Lys1117–Arg1447. Position 1136 is an N6-acetyllysine (Lys1136). Residues Pro1137 to Val1155 show a composition bias toward polar residues. Residues Ser1140, Ser1162, Ser1166, Ser1176, Ser1182, and Ser1191 each carry the phosphoserine modification. A compositionally biased stretch (low complexity) spans Ser1156–Pro1167. The segment covering Gly1172–Asn1184 has biased composition (basic and acidic residues). Composition is skewed to basic and acidic residues over residues Lys1196–Pro1214 and Gln1225–Pro1243. Residues Gly1245–His1254 are compositionally biased toward basic residues. The a.T hook 1 DNA-binding region spans Ser1249–Glu1261. A Phosphothreonine modification is found at Thr1255. Residues Ser1257 and Ser1259 each carry the phosphoserine modification. Over residues Pro1265–Ile1274 the composition is skewed to basic and acidic residues. Residue Ser1283 is modified to Phosphoserine. Residues Lys1287–Gly1299 constitute a DNA-binding region (a.T hook 2). The segment covering Thr1310–Ser1319 has biased composition (basic residues). A phosphoserine mark is found at Ser1319 and Ser1334. The segment covering Lys1342–Gln1353 has biased composition (basic residues). Residues Arg1355–Gln1372 show a composition bias toward polar residues. Phosphoserine occurs at positions 1358 and 1366. Residue Thr1367 is modified to Phosphothreonine. Phosphoserine is present on Ser1369. 2 positions are modified to phosphothreonine: Thr1370 and Thr1381. The a.T hook 3 DNA-binding region spans Gln1372–Pro1384. Over residues Ser1379–Lys1388 the composition is skewed to low complexity. 2 positions are modified to phosphoserine: Ser1383 and Ser1417. A compositionally biased stretch (acidic residues) spans Ile1422 to Val1432. The span at Val1437–Arg1447 shows a compositional bias: basic residues.

Belongs to the PDS5 family. In terms of assembly, interacts with the cohesin complex. Interacts with RAD21; the interaction is direct. Interacts with WAPL (via FGF motifs) or CDCA5 (via the FGF motif); the interaction is direct, cohesin-dependent and competitive. In terms of tissue distribution, widely expressed.

The protein resides in the nucleus. Functionally, regulator of sister chromatid cohesion in mitosis which may stabilize cohesin complex association with chromatin. May couple sister chromatid cohesion during mitosis to DNA replication. Cohesion ensures that chromosome partitioning is accurate in both meiotic and mitotic cells and plays an important role in DNA repair. Plays a role in androgen-induced proliferative arrest in prostate cells. This chain is Sister chromatid cohesion protein PDS5 homolog B (PDS5B), found in Homo sapiens (Human).